The primary structure comprises 83 residues: Bowman-Birk type proteinase inhibitor C-II (83 aa).

Positions 1-7 are excised as a propeptide; that stretch reads MELNLFK. 7 disulfide bridges follow: cysteine 21-cysteine 75, cysteine 22-cysteine 37, cysteine 25-cysteine 71, cysteine 27-cysteine 35, cysteine 45-cysteine 52, cysteine 49-cysteine 64, and cysteine 54-cysteine 62.

Belongs to the Bowman-Birk serine protease inhibitor family.

This Glycine max (Soybean) protein is Bowman-Birk type proteinase inhibitor C-II.